The following is a 302-amino-acid chain: MAANSAGEYIKHHLGNLTYGKLPEGYVRECHGHAETLSQATWTMACNGTEAKDMGFAAFHVDSLAWSGGLGIIMCLLFWLGARKATAGVPSGFLNFVEIIIEFIDTQVRDSFHGKSKLIAPLSLVIFCWVFLMNLMDLIPVDFIPKTFEWVMVTFFGWSAHEAYFKIVPSTDPNITLGMSFSVMFLIIFLTIKTKGVGGFVGTLALHPFESGNPVVKALLIPINLLLETIALLAKPVSLGLRLFGNMYAGEFVFILLAAMMGTWQFIGAWPWAVFHILVITLQAFIFMVLTIVYLSMAVEEH.

A run of 7 helical transmembrane segments spans residues 61–81 (VDSL…FWLG), 119–139 (IAPL…MDLI), 148–168 (FEWV…FKIV), 172–192 (DPNI…FLTI), 214–234 (PVVK…ALLA), 252–272 (FVFI…AWPW), and 273–293 (AVFH…LTIV).

It belongs to the ATPase A chain family. In terms of assembly, F-type ATPases have 2 components, CF(1) - the catalytic core - and CF(0) - the membrane proton channel. CF(1) has five subunits: alpha(3), beta(3), gamma(1), delta(1), epsilon(1). CF(0) has three main subunits: a(1), b(2) and c(9-12). The alpha and beta chains form an alternating ring which encloses part of the gamma chain. CF(1) is attached to CF(0) by a central stalk formed by the gamma and epsilon chains, while a peripheral stalk is formed by the delta and b chains.

The protein localises to the cell inner membrane. Key component of the proton channel; it plays a direct role in the translocation of protons across the membrane. In Alcanivorax borkumensis (strain ATCC 700651 / DSM 11573 / NCIMB 13689 / SK2), this protein is ATP synthase subunit a.